A 394-amino-acid chain; its full sequence is MDSQGRKVVVCDNGTGFVKCGYAGSNFPEHIFPALVGRPIIRSTTKVGNIEIKDLMVGDEASELRSMLEVNYPMENGIVRNWDDMKHLWDYTFGPEKLNIDTRNCKILLTEPPMNPTKNREKIVEVMFETYQFSGVYVAIQAVLTLYAQGLLTGVVVDSGDGVTHICPVYEDFSLPHLTRRLDIAGRDITRYLIKLLLLRGYAFNHSADFETVRMIKEKLCYVGYNIEQEQKLALETTVLVESYTLPDGRIIKVGGERFEAPEALFQPHLINVEGVGVAELLFNTIQAADIDTRSEFYKHIVLSGGSTMYPGLPSRLERELKQLYLERVLKGDVEKLSKFKIRIEDPPRRKHMVFLGGAVLADIMKDKDNFWMTRQEYQEKGVRVLEKLGVTVR.

Met1 bears the N-acetylmethionine mark. ATP contacts are provided by residues 160 to 162 (GDG) and 214 to 218 (RMIKE). Lys299 is modified (N6-acetyllysine). 305–310 (GGSTMY) contacts ATP. Lys322 bears the N6-acetyllysine mark.

The protein belongs to the actin family. ARP2 subfamily. Component of the Arp2/3 complex composed of ACTR2/ARP2, ACTR3/ARP3, ARPC1B/p41-ARC, ARPC2/p34-ARC, ARPC3/p21-ARC, ARPC4/p20-ARC and ARPC5/p16-ARC. Interacts with AVIL.

The protein localises to the cytoplasm. It is found in the cytoskeleton. The protein resides in the cell projection. It localises to the nucleus. Its function is as follows. ATP-binding component of the Arp2/3 complex, a multiprotein complex that mediates actin polymerization upon stimulation by nucleation-promoting factor (NPF). The Arp2/3 complex mediates the formation of branched actin networks in the cytoplasm, providing the force for cell motility. Seems to contact the pointed end of the daughter actin filament. In podocytes, required for the formation of lamellipodia downstream of AVIL and PLCE1 regulation. In addition to its role in the cytoplasmic cytoskeleton, the Arp2/3 complex also promotes actin polymerization in the nucleus, thereby regulating gene transcription and repair of damaged DNA. The Arp2/3 complex promotes homologous recombination (HR) repair in response to DNA damage by promoting nuclear actin polymerization, leading to drive motility of double-strand breaks (DSBs). This chain is Actin-related protein 2 (ACTR2), found in Pongo abelii (Sumatran orangutan).